The primary structure comprises 119 residues: Large ribosomal subunit protein uL22 (119 aa).

Belongs to the universal ribosomal protein uL22 family. Part of the 50S ribosomal subunit.

Its function is as follows. This protein binds specifically to 23S rRNA; its binding is stimulated by other ribosomal proteins, e.g. L4, L17, and L20. It is important during the early stages of 50S assembly. It makes multiple contacts with different domains of the 23S rRNA in the assembled 50S subunit and ribosome. The globular domain of the protein is located near the polypeptide exit tunnel on the outside of the subunit, while an extended beta-hairpin is found that lines the wall of the exit tunnel in the center of the 70S ribosome. This is Large ribosomal subunit protein uL22 from Chlorobium phaeobacteroides (strain DSM 266 / SMG 266 / 2430).